The sequence spans 200 residues: GTP cyclohydrolase-2 (200 aa).

A GTP-binding site is contributed by 49–53; the sequence is RVHSE. Cysteine 54, cysteine 65, and cysteine 67 together coordinate Zn(2+). GTP contacts are provided by residues glutamine 70, 92–94, and threonine 114; that span reads EGR. The Proton acceptor role is filled by aspartate 126. The Nucleophile role is filled by arginine 128. Residues threonine 149 and lysine 154 each coordinate GTP.

The protein belongs to the GTP cyclohydrolase II family. Homodimer. It depends on Zn(2+) as a cofactor.

It carries out the reaction GTP + 4 H2O = 2,5-diamino-6-hydroxy-4-(5-phosphoribosylamino)-pyrimidine + formate + 2 phosphate + 3 H(+). It functions in the pathway cofactor biosynthesis; riboflavin biosynthesis; 5-amino-6-(D-ribitylamino)uracil from GTP: step 1/4. Functionally, catalyzes the conversion of GTP to 2,5-diamino-6-ribosylamino-4(3H)-pyrimidinone 5'-phosphate (DARP), formate and pyrophosphate. The protein is GTP cyclohydrolase-2 of Klebsiella pneumoniae (strain 342).